The following is a 154-amino-acid chain: Protein X (154 aa).

The interval 68–117 (PCALRFTSARRMETTVNAHQFLPKVLHKRTLGLSVMSTTDLEAYFKDCLF) is mitochondrial targeting sequence.

Belongs to the orthohepadnavirus protein X family. In terms of assembly, may form homodimer. May interact with host CEBPA, CFLAR, CREB1, DDB1, E4F1, HBXIP, HSPD1/HSP60, NFKBIA, POLR2E and SMAD4. Interacts with host SMC5-SMC6 complex and induces its degradation. Interacts with host TRPC4AP; leading to prevent ubiquitination of TRPC4AP. Interacts with host PLSCR1; this interaction promotes ubiquitination and degradation of HBx and impairs HBx-mediated cell proliferation. A fraction may be phosphorylated in insect cells and HepG2 cells, a human hepatoblastoma cell line. Phosphorylated in vitro by host protein kinase C or mitogen-activated protein kinase. N-acetylated in insect cells.

The protein localises to the host cytoplasm. It is found in the host nucleus. Its subcellular location is the host mitochondrion. Multifunctional protein that plays a role in silencing host antiviral defenses and promoting viral transcription. Does not seem to be essential for HBV infection. May be directly involved in development of cirrhosis and liver cancer (hepatocellular carcinoma). Most of cytosolic activities involve modulation of cytosolic calcium. The effect on apoptosis is controversial depending on the cell types in which the studies have been conducted. May induce apoptosis by localizing in mitochondria and causing loss of mitochondrial membrane potential. May also modulate apoptosis by binding host CFLAR, a key regulator of the death-inducing signaling complex (DISC). Promotes viral transcription by using the host E3 ubiquitin ligase DDB1 to target the SMC5-SMC6 complex to proteasomal degradation. This host complex would otherwise bind to viral episomal DNA, and prevents its transcription. Moderately stimulates transcription of many different viral and cellular transcription elements. Promoters and enhancers stimulated by HBx contain DNA binding sites for NF-kappa-B, AP-1, AP-2, c-EBP, ATF/CREB, or the calcium-activated factor NF-AT. This Hepatitis B virus genotype D (isolate France/alpha1/1989) (HBV-D) protein is Protein X.